The primary structure comprises 205 residues: Dephospho-CoA kinase (205 aa).

In terms of domain architecture, DPCK spans 4-203; it reads KIGITGGIGS…QKIHYLCSAK (200 aa). ATP is bound at residue 12–17; the sequence is GSGKSV.

The protein belongs to the CoaE family.

The protein localises to the cytoplasm. The enzyme catalyses 3'-dephospho-CoA + ATP = ADP + CoA + H(+). The protein operates within cofactor biosynthesis; coenzyme A biosynthesis; CoA from (R)-pantothenate: step 5/5. Its function is as follows. Catalyzes the phosphorylation of the 3'-hydroxyl group of dephosphocoenzyme A to form coenzyme A. The chain is Dephospho-CoA kinase from Bacteroides fragilis (strain YCH46).